The chain runs to 333 residues: MGKDRLPELLQRSLSTNSSNSSSNGSLLLNVYSGTTEFIIGNTGGNNNSYSVVSQNSHSCSNNNSSTEPKDRSSSKMTQYGSNVDDILNPYTEIRQQLAQIAANLETMNRMAQTVNLRTFNENEMDELHNKNLRLGNQLMTRFNDFKANLPAENDYSLEARMKRTLFYGLHQTFINLWHKNELFLQNYETKVKKNLRLHTKIINSEASEQEIELLIENKTTKLFVDNFLQETEKERQTLREMMDRFNELRRLEKSIEEVHALFMRIQTLVMEQSEVIQRVEFHAQQATLHVDKGADELDQAEQHQKKARKKKIMLIVILAAVLLVLLLVGIYL.

Residues 1–312 (MGKDRLPELL…QHQKKARKKK (312 aa)) are Cytoplasmic-facing. Positions 50–66 (YSVVSQNSHSCSNNNSS) are enriched in low complexity. Residues 50–81 (YSVVSQNSHSCSNNNSSTEPKDRSSSKMTQYG) form a disordered region. Residues 91–116 (YTEIRQQLAQIAANLETMNRMAQTVN) are a coiled coil. Residues 239-301 (LREMMDRFNE…DKGADELDQA (63 aa)) form the t-SNARE coiled-coil homology domain. The chain crosses the membrane as a helical; Anchor for type IV membrane protein span at residues 313 to 333 (IMLIVILAAVLLVLLLVGIYL).

This sequence belongs to the syntaxin family.

It is found in the membrane. Functionally, potentially involved in docking of synaptic vesicles at presynaptic active zones. The chain is Syntaxin-4 from Drosophila melanogaster (Fruit fly).